A 183-amino-acid polypeptide reads, in one-letter code: Ankyrin repeat domain-containing protein 39 (183 aa).

ANK repeat units lie at residues 30 to 59, 63 to 92, 96 to 125, and 129 to 158; these read DFERGIWSAALNGDLGRVKHLIQKAEDPSQ, AGYTALHYASRNGHYAVCQFLLESGAKCDA, GGATALHRASYCGHTEIARLLLSHGSNPRV, and DGMTSLHKAAERGHGDICSLLLQHSPALKA. Serine 153 carries the post-translational modification Phosphoserine.

It belongs to the ANKRD39 family.

This is Ankyrin repeat domain-containing protein 39 (ANKRD39) from Homo sapiens (Human).